The primary structure comprises 279 residues: Energy-coupling factor transporter ATP-binding protein EcfA (279 aa).

The ABC transporter domain occupies 4-239 (VETKDLYFRY…VETIRKANLR (236 aa)). 37–44 (GPNGAGKS) serves as a coordination point for ATP.

It belongs to the ABC transporter superfamily. Energy-coupling factor EcfA family. As to quaternary structure, forms a stable energy-coupling factor (ECF) transporter complex composed of 2 membrane-embedded substrate-binding proteins (S component), 2 ATP-binding proteins (A component) and 2 transmembrane proteins (T component).

It is found in the cell membrane. In terms of biological role, ATP-binding (A) component of a common energy-coupling factor (ECF) ABC-transporter complex. Unlike classic ABC transporters this ECF transporter provides the energy necessary to transport a number of different substrates. The polypeptide is Energy-coupling factor transporter ATP-binding protein EcfA (Methanocaldococcus jannaschii (strain ATCC 43067 / DSM 2661 / JAL-1 / JCM 10045 / NBRC 100440) (Methanococcus jannaschii)).